The following is a 380-amino-acid chain: Ubiquitin-like protein 7 (380 aa).

Positions 18–98 (APKSILRLPE…VLRKSWPEPD (81 aa)) constitute a Ubiquitin-like domain. Positions 201–313 (PMPGADSSSR…SSSVQSGTPI (113 aa)) are disordered. Position 230 is a phosphoserine (serine 230). 2 stretches are compositionally biased toward low complexity: residues 239-255 (SARS…RPAS) and 270-312 (SELA…SGTP). Residues 333–377 (SLQSQWQPQLQQLRDMGIQDDELSLRALQATGGDIQAALELIFAG) form the UBA domain.

In terms of assembly, binds ubiquitin. Interacts with MAVS; this interaction enhances TRIM21-dependent 'Lys-27'-linked polyubiquitination of MAVS. In terms of processing, deubiquitinated by OTUD4 which stabilizes UBL7 expression.

Interferon-stimulated protein that positively regulates RNA virus-triggered innate immune signaling. Mechanistically, promotes 'Lys-27'-linked polyubiquitination of MAVS through TRIM21 leading to enhanced the IFN signaling pathway. In Bos taurus (Bovine), this protein is Ubiquitin-like protein 7 (UBL7).